The following is a 217-amino-acid chain: GTP-binding protein Rit2 (217 aa).

Residues 27-34, 74-78, and 133-136 contribute to the GTP site; these read GAGGVGKS, DTAGQ, and NKID.

The protein belongs to the small GTPase superfamily. Ras family. In terms of assembly, interacts with AFDN, the C-terminal domain of RALGDS and RLF, but not with RIN1 and PIK3CA. RLF binds exclusively to the active GTP-bound form. Binds calmodulin. Interacts with PLXNB3.

The protein resides in the nucleus. It is found in the cell membrane. The catalysed reaction is GTP + H2O = GDP + phosphate + H(+). Alternates between an inactive form bound to GDP and an active form bound to GTP. Its function is as follows. Binds and exchanges GTP and GDP. In Rattus norvegicus (Rat), this protein is GTP-binding protein Rit2 (Rit2).